A 638-amino-acid polypeptide reads, in one-letter code: Guanylate-binding protein 7 (638 aa).

A GTPase domain (Globular) region spans residues M1–C310. A GB1/RHD3-type G domain is found at T35 to K277. GTP contacts are provided by residues G45–S52, L67–C69, and D97–L101. Positions L311–S638 are interaction with the CYBA-CYBB complex. A C-terminal tail; required for its localization to cytoplasmic vesicle region spans residues P590–S638.

The protein belongs to the TRAFAC class dynamin-like GTPase superfamily. GB1/RHD3 GTPase family. GB1 subfamily. As to quaternary structure, monomer and dimer. Interacts with CYBA, CYBA-CYBB complex and ATG4B. Interacts (via GB1/RHD3-type G domain) with NCF2 and NCF2-NCF4 complex.

It localises to the cytoplasmic vesicle membrane. It carries out the reaction GTP + H2O = GDP + phosphate + H(+). The catalysed reaction is GDP + H2O = GMP + phosphate + H(+). In terms of biological role, interferon (IFN)-inducible GTPase that plays important roles in innate immunity against a diverse range of bacterial, viral and protozoan pathogens. Hydrolyzes GTP to GMP in two consecutive cleavage reactions and predominantly uses GTP and not GDP or GMP as the substrate. Following infection, recruited to the pathogen-containing vacuoles or vacuole-escaped bacteria and acts as a positive regulator of inflammasome assembly by promoting the release of inflammasome ligands from bacteria. Acts by promoting lysis of pathogen-containing vacuoles, releasing pathogens into the cytosol. Following pathogen release in the cytosol, promotes recruitment of proteins that mediate bacterial cytolysis: this liberates ligands that are detected by inflammasomes, such as lipopolysaccharide (LPS) that activates the non-canonical CASP4/CASP11 inflammasome or double-stranded DNA (dsDNA) that activates the AIM2 inflammasome. Also promotes IFN-gamma-mediated host defense against bacterial infections by regulating oxidative responses and bacteriolytic peptide generation. May help to assemble NADPH oxidase on phagosomal membranes by acting as a bridging protein between NADPH oxidase cytosolic subunits NCF2-NCF4 and the membrane subunits CYBA-CYBB. Participates along with GBP1 in trafficking monoubiquinated protein cargo to autolysosomes for generating ubiquitin-derived antimicrobial peptides. Facilitates influenza A virus replication by inhibiting the activation of NF-kappaB and JAK-STAT signaling pathways and the expression of type I, type III interferons and pro-inflammatory cytokines. Confers protection to several pathogens, including the bacterial pathogens Listeria monocytogenes and Mycobacterium bovis BCG as well as the protozoan pathogen Toxoplasma gondii. Required for disruption of the parasitophorous vacuole formed following T.gondii infection and subsequent killing of the parasite. The chain is Guanylate-binding protein 7 (GBP7) from Homo sapiens (Human).